A 182-amino-acid polypeptide reads, in one-letter code: tRNA-splicing endonuclease (182 aa).

Residues Tyr-119, His-127, and Lys-158 contribute to the active site.

Belongs to the tRNA-intron endonuclease family. Archaeal short subfamily. As to quaternary structure, homotetramer; although the tetramer contains four active sites, only two participate in the cleavage. Therefore, it should be considered as a dimer of dimers.

The enzyme catalyses pretRNA = a 3'-half-tRNA molecule with a 5'-OH end + a 5'-half-tRNA molecule with a 2',3'-cyclic phosphate end + an intron with a 2',3'-cyclic phosphate and a 5'-hydroxyl terminus.. Endonuclease that removes tRNA introns. Cleaves pre-tRNA at the 5'- and 3'-splice sites to release the intron. The products are an intron and two tRNA half-molecules bearing 2',3' cyclic phosphate and 5'-OH termini. Recognizes a pseudosymmetric substrate in which 2 bulged loops of 3 bases are separated by a stem of 4 bp. This chain is tRNA-splicing endonuclease, found in Saccharolobus islandicus (strain M.16.27) (Sulfolobus islandicus).